Here is a 118-residue protein sequence, read N- to C-terminus: DNA polymerase epsilon subunit 4 (118 aa).

Low complexity-rich tracts occupy residues 1–11 (MAAAAAAGSGT) and 19–35 (GGEA…SAPG). The tract at residues 1–37 (MAAAAAAGSGTPREEEAPGGEAAASQAQAPTSAPGGV) is disordered. Ala2 bears the N-acetylalanine mark. A Phosphothreonine modification is found at Thr11. The residue at position 25 (Ser25) is a Phosphoserine.

As to quaternary structure, component of the DNA polymerase epsilon complex consisting of four subunits: the catalytic subunit POLE and the accessory subunits POLE2, POLE3 and POLE4. Interaction with POLE3 is a prerequisite for further binding with POLE and POLE2.

Its subcellular location is the nucleus. Its function is as follows. Accessory component of the DNA polymerase epsilon complex. Participates in DNA repair and in chromosomal DNA replication. In Mus musculus (Mouse), this protein is DNA polymerase epsilon subunit 4 (Pole4).